Consider the following 370-residue polypeptide: Alpha-(1,3)-fucosyltransferase 7 (370 aa).

Over 1–36 (MVQGCLCWRGCCDLKTSFPWVTNSRRLWMNCIGCNP) the chain is Cytoplasmic. The chain crosses the membrane as a helical; Signal-anchor for type II membrane protein span at residues 37–59 (VWRLRAWGCLAGGTTLMVIWLFW). Residues 60 to 370 (LLRSVPGGAP…YEDLESWFQA (311 aa)) lie on the Lumenal side of the membrane. N-linked (GlcNAc...) asparagine glycosylation is present at Asn86. A disulfide bridge connects residues Cys96 and Cys104. An N-linked (GlcNAc...) asparagine glycan is attached at Asn109. An intrachain disulfide couples Cys239 to Cys242. Asn319 is a glycosylation site (N-linked (GlcNAc...) asparagine). Cysteines 346 and 349 form a disulfide.

This sequence belongs to the glycosyltransferase 10 family. In terms of processing, N-glycosylated. Expressed in lymph node and kidney.

It localises to the golgi apparatus. The protein resides in the golgi stack membrane. The enzyme catalyses an N-acetyl-alpha-neuraminyl-(2-&gt;3)-beta-D-galactosyl-(1-&gt;4)-N-acetyl-beta-D-glucosaminyl derivative + GDP-beta-L-fucose = an alpha-Neu5Ac-(2-&gt;3)-beta-D-Gal-(1-&gt;4)-[alpha-L-Fuc-(1-&gt;3)]-beta-D-GlcNAc derivative + GDP + H(+). The catalysed reaction is a neolactoside IV(3)-alpha-NeuAc-nLc4Cer + GDP-beta-L-fucose = a neolactoside IV(3)-alpha-NeuNAc,III(3)-alpha-Fuc-nLc4Cer + GDP + H(+). It catalyses the reaction a neolactoside VI(3)-alpha-NeuNAc-nLc6Cer + GDP-beta-L-fucose = a neolactoside VI(3)-alpha-NeuAc,V(3)-alphaFuc-nLc6Cer + GDP + H(+). It carries out the reaction an alpha-Neu5Ac-(2-&gt;3)-beta-D-Gal-(1-&gt;4)-beta-D-GlcNAc-(1-&gt;3)-beta-D-Gal-(1-&gt;4)-[alpha-L-Fuc-(1-&gt;3)]-beta-D-GlcNAc derivative + GDP-beta-L-fucose = an alpha-Neu5Ac-(2-&gt;3)-beta-D-Gal-(1-&gt;4)-[alpha-L-Fuc-(1-&gt;3)]-beta-D-GlcNAc-(1-&gt;3)-beta-D-Gal-(1-&gt;4)-[alpha-L-Fuc-(1-&gt;3)]-beta-D-GlcNAc derivative + GDP + H(+). The enzyme catalyses an alpha-Neu5Ac-(2-&gt;3)-beta-D-Gal-(1-&gt;4)-beta-D-GlcNAc6S derivative + GDP-beta-L-fucose = an alpha-Neu5Ac-(2-&gt;3)-beta-D-Gal-(1-&gt;4)-[alpha-L-Fuc-(1-&gt;3)]-beta-D-GlcNAc6S derivative + GDP + H(+). The catalysed reaction is alpha-Neu5Ac-(2-&gt;3)-beta-D-Gal-(1-&gt;4)-beta-D-GlcNAc-(1-&gt;3)-beta-D-Gal-(1-&gt;4)-D-Glc + GDP-beta-L-fucose = alpha-Neu5Ac-(2-&gt;3)-beta-D-Gal-(1-&gt;4)-[alpha-L-Fuc-(1-&gt;3)]-beta-D-GlcNAc-(1-&gt;3)-beta-D-Gal-(1-&gt;4)-D-Glc + GDP + H(+). It catalyses the reaction alpha-Neu5Ac-(2-&gt;3)-beta-D-Gal-(1-&gt;4)-beta-D-GlcNAc-(1-&gt;3)-beta-D-Gal-(1-&gt;4)-[alpha-L-Fuc-(1-&gt;3)]-beta-D-GlcNAc-(1-&gt;3)-beta-D-Gal-(1-&gt;4)-beta-D-GlcNAc + GDP-beta-L-fucose = alpha-Neu5Ac-(2-&gt;3)-beta-D-Gal-(1-&gt;4)-[alpha-L-Fuc-(1-&gt;3)]-beta-D-GlcNAc-(1-&gt;3)-beta-D-Gal-(1-&gt;4)-[alpha-L-Fuc-(1-&gt;3)]-beta-D-GlcNAc-(1-&gt;3)-beta-D-Gal-(1-&gt;4)-beta-D-GlcNAc + GDP + H(+). It carries out the reaction alpha-Neu5Ac-(2-&gt;3)-beta-D-Gal-(1-&gt;4)-beta-D-GlcNAc-(1-&gt;3)-beta-D-Gal-(1-&gt;4)-beta-D-GlcNAc-(1-&gt;3)-beta-D-Gal-(1-&gt;4)-beta-D-GlcNAc + GDP-beta-L-fucose = alpha-Neu5Ac-(2-&gt;3)-beta-D-Gal-(1-&gt;4)-[alpha-L-Fuc-(1-&gt;3)]-beta-D-GlcNAc-(1-&gt;3)-beta-D-Gal-(1-&gt;4)-beta-D-GlcNAc-(1-&gt;3)-beta-D-Gal-(1-&gt;4)-beta-D-GlcNAc + GDP + H(+). Its pathway is protein modification; protein glycosylation. With respect to regulation, inhibited by NaCl. Inhibited by GDP in a concentration dependent manner, with an IC(50) value of 93 uM. Also inhibited by GMP and GTP. Inhibited by N-ethylmaleimide. Activated by poly(ethylene glycol) by enhancing the thermal stability of FUT7. Activated by Mn2+, Ca2+, and Mg2+. Both panosialin A and B inhibit activity with IC(50) values of 4.8 and 5.3 ug/ml, respectively. Inhibited by gallic acid (GA) and (-)-epigallocatechin gallate (EGCG) in a time-dependent and irreversible manner with IC(50) values of 60 and 700 nM, respectively. Functionally, catalyzes the transfer of L-fucose, from a guanosine diphosphate-beta-L-fucose, to the N-acetyl glucosamine (GlcNAc) of a distal alpha2,3 sialylated lactosamine unit of a glycoprotein or a glycolipid-linked sialopolylactosamines chain through an alpha-1,3 glycosidic linkage and participates in the final fucosylation step in the biosynthesis of the sialyl Lewis X (sLe(x)), a carbohydrate involved in cell and matrix adhesion during leukocyte trafficking and fertilization. In vitro, also synthesizes sialyl-dimeric-Lex structures, from VIM-2 structures and both di-fucosylated and trifucosylated structures from mono-fucosylated precursors. However does not catalyze alpha 1-3 fucosylation when an internal alpha 1-3 fucosylation is present in polylactosamine chain and the fucosylation rate of the internal GlcNAc residues is reduced once fucose has been added to the distal GlcNAc. Also catalyzes the transfer of a fucose from GDP-beta-fucose to the 6-sulfated a(2,3)sialylated substrate to produce 6-sulfo sLex mediating significant L-selectin-dependent cell adhesion. Through sialyl-Lewis(x) biosynthesis, can control SELE- and SELP-mediated cell adhesion with leukocytes and allows leukocytes tethering and rolling along the endothelial tissue thereby enabling the leukocytes to accumulate at a site of inflammation. May enhance embryo implantation through sialyl Lewis X (sLeX)-mediated adhesion of embryo cells to endometrium. May affect insulin signaling by up-regulating the phosphorylation and expression of some signaling molecules involved in the insulin-signaling pathway through SLe(x) which is present on the glycans of the INSRR alpha subunit. This Rattus norvegicus (Rat) protein is Alpha-(1,3)-fucosyltransferase 7.